A 104-amino-acid polypeptide reads, in one-letter code: Nucleoid-associated protein Bsph_0039 (104 aa).

A compositionally biased stretch (low complexity) spans 1–12; the sequence is MRGMGNMQGMMK. The segment at 1-22 is disordered; that stretch reads MRGMGNMQGMMKKMQKMQKEMM.

The protein belongs to the YbaB/EbfC family. In terms of assembly, homodimer.

It localises to the cytoplasm. The protein localises to the nucleoid. In terms of biological role, binds to DNA and alters its conformation. May be involved in regulation of gene expression, nucleoid organization and DNA protection. The polypeptide is Nucleoid-associated protein Bsph_0039 (Lysinibacillus sphaericus (strain C3-41)).